The following is a 72-amino-acid chain: UPF0270 protein YheU (72 aa).

The protein belongs to the UPF0270 family.

This is UPF0270 protein YheU from Escherichia coli (strain ATCC 8739 / DSM 1576 / NBRC 3972 / NCIMB 8545 / WDCM 00012 / Crooks).